The sequence spans 877 residues: Leucine--tRNA ligase (877 aa).

The 'HIGH' region motif lies at 43–53 (PYPSGRIHMGH). A 'KMSKS' region motif is present at residues 628–632 (KMSKS). Lysine 631 is a binding site for ATP.

Belongs to the class-I aminoacyl-tRNA synthetase family.

It is found in the cytoplasm. It catalyses the reaction tRNA(Leu) + L-leucine + ATP = L-leucyl-tRNA(Leu) + AMP + diphosphate. The protein is Leucine--tRNA ligase of Brucella melitensis biotype 2 (strain ATCC 23457).